The sequence spans 273 residues: 3-methyl-2-oxobutanoate hydroxymethyltransferase (273 aa).

Residues Asp-53 and Asp-92 each coordinate Mg(2+). 3-methyl-2-oxobutanoate is bound by residues 53-54 (DS), Asp-92, and Lys-120. Glu-122 contacts Mg(2+). Residue Glu-189 is the Proton acceptor of the active site.

Belongs to the PanB family. Homodecamer; pentamer of dimers. Requires Mg(2+) as cofactor.

Its subcellular location is the cytoplasm. The catalysed reaction is 3-methyl-2-oxobutanoate + (6R)-5,10-methylene-5,6,7,8-tetrahydrofolate + H2O = 2-dehydropantoate + (6S)-5,6,7,8-tetrahydrofolate. It participates in cofactor biosynthesis; (R)-pantothenate biosynthesis; (R)-pantoate from 3-methyl-2-oxobutanoate: step 1/2. Its function is as follows. Catalyzes the reversible reaction in which hydroxymethyl group from 5,10-methylenetetrahydrofolate is transferred onto alpha-ketoisovalerate to form ketopantoate. This is 3-methyl-2-oxobutanoate hydroxymethyltransferase from Cupriavidus pinatubonensis (strain JMP 134 / LMG 1197) (Cupriavidus necator (strain JMP 134)).